A 96-amino-acid chain; its full sequence is Citrate lyase acyl carrier protein (96 aa).

Ser14 is modified (O-(phosphoribosyl dephospho-coenzyme A)serine).

The protein belongs to the CitD family. As to quaternary structure, oligomer with a subunit composition of (alpha,beta,gamma)6.

The protein localises to the cytoplasm. Functionally, covalent carrier of the coenzyme of citrate lyase. The protein is Citrate lyase acyl carrier protein of Pectobacterium carotovorum subsp. carotovorum (strain PC1).